The primary structure comprises 153 residues: Superoxide dismutase [Cu-Zn] (153 aa).

3 residues coordinate Cu cation: H45, H47, and H62. A disulfide bond links C56 and C145. Zn(2+)-binding residues include H62, H70, H79, and D82. Residue H119 participates in Cu cation binding.

The protein belongs to the Cu-Zn superoxide dismutase family. Homodimer. Cu cation serves as cofactor. The cofactor is Zn(2+).

Its subcellular location is the cytoplasm. It catalyses the reaction 2 superoxide + 2 H(+) = H2O2 + O2. Functionally, destroys radicals which are normally produced within the cells and which are toxic to biological systems. In Drosophila orena (Fruit fly), this protein is Superoxide dismutase [Cu-Zn].